We begin with the raw amino-acid sequence, 73 residues long: Neuropeptide-like protein 29 (73 aa).

Residues 1–22 (MISTSSILVLVVLLACFMAASA) form the signal peptide. Tyr29, Tyr39, Tyr47, Tyr55, and Tyr63 each carry tyrosine amide. Trp71 carries the post-translational modification Tryptophan amide.

The protein belongs to the YARP (YGGW-amide related peptide) family. Weakly or not expressed in absence of infection. Upon infection by D.coniospora, it is expressed in hypoderm. Also expressed in perivulval cells when D.coniospora spores adhere to this region. Expressed in hypodermis upon physical injury.

It localises to the secreted. Antimicrobial peptides that have antibacterial activity against the Gram-negative bacteria S.marcescens. Has antifungal activity against D.coniospora. May play a role in response to physical injury and osmotic stress. Through the neuropeptide receptor nlp-29, induces sleep upon activation of the innate immune response to molting and injury to the adult epidermis. The protein is Neuropeptide-like protein 29 of Caenorhabditis elegans.